The sequence spans 445 residues: Phosphoglucosamine mutase (445 aa).

Residue Ser-102 is the Phosphoserine intermediate of the active site. 4 residues coordinate Mg(2+): Ser-102, Asp-241, Asp-243, and Asp-245. A Phosphoserine modification is found at Ser-102.

The protein belongs to the phosphohexose mutase family. Requires Mg(2+) as cofactor. Activated by phosphorylation.

It catalyses the reaction alpha-D-glucosamine 1-phosphate = D-glucosamine 6-phosphate. Catalyzes the conversion of glucosamine-6-phosphate to glucosamine-1-phosphate. This chain is Phosphoglucosamine mutase, found in Escherichia coli O157:H7.